The chain runs to 218 residues: Glutathione S-transferase PM239X14 (218 aa).

The region spanning 2 to 85 (VTVKLYGMAY…YLVAKYGKGS (84 aa)) is the GST N-terminal domain. Residues 12–13 (ST), 41–42 (HK), 55–56 (VI), and 69–70 (ES) contribute to the glutathione site. A GST C-terminal domain is found at 93-218 (DPKAYGLFEQ…LLRNSSKEFM (126 aa)).

It belongs to the GST superfamily. Phi family. Expressed in vegetative rosettes.

It is found in the cytoplasm. The protein localises to the cytosol. It carries out the reaction RX + glutathione = an S-substituted glutathione + a halide anion + H(+). Specifically catalyzes the conjugation of synthetic 1-chloro-2,4-ditrobenzene to GSH. Also functions as a glutathione peroxidase, converting linoleate oxidation products into their corresponding hydroxyacids. This enzyme may thus serve to protect the cell from oxygen toxicity as well as from exogenous toxins such as herbicides. In Arabidopsis thaliana (Mouse-ear cress), this protein is Glutathione S-transferase PM239X14.